The following is a 387-amino-acid chain: Lymphocyte transmembrane adapter 1 (387 aa).

Over 1–37 (MDVTTSAWSETTRRISEPSTLQGTLGSLDKAEDHSSS) the chain is Extracellular. The helical; Signal-anchor for type III membrane protein transmembrane segment at 38-58 (IFSGFAALLAILLVVAVICVL) threads the bilayer. Residues 59 to 387 (WCCGKRKKRQ…VCAAEAGARG (329 aa)) are Cytoplasmic-facing. A disordered region spans residues 114 to 136 (VSTESLLSRNSDSPSSEHVPSRA). Low complexity predominate over residues 118 to 129 (SLLSRNSDSPSS). Residue Tyr-195 is modified to Phosphotyrosine. Residues 230-268 (SEEIDEGCGNASDCTSLGSPGTENSDPLSDGEGSSQTSN) form a disordered region. The span at 241-268 (SDCTSLGSPGTENSDPLSDGEGSSQTSN) shows a compositional bias: polar residues. Phosphotyrosine occurs at positions 270 and 296. The interval 294–387 (RDYENVPPGP…VCAAEAGARG (94 aa)) is disordered. Basic and acidic residues predominate over residues 319 to 329 (DHVEGRTDGPE). Residues 360 to 369 (PWEDAEETSS) are compositionally biased toward acidic residues. Tyr-375 carries the phosphotyrosine modification.

When phosphorylated, interacts with GRB2, PIK3R1 and GRAP2. In terms of processing, phosphorylated on tyrosines upon TCR or BCR activation; which leads to the recruitment of GRB2, PIK3R1 and GRAP2.

The protein resides in the cell membrane. In terms of biological role, negatively regulates TCR (T-cell antigen receptor)-mediated signaling in T-cells and BCR (B-cell antigen receptor)-mediated signaling in B-cells. This is Lymphocyte transmembrane adapter 1 (LAX1) from Bos taurus (Bovine).